Consider the following 370-residue polypeptide: UDP-N-acetylglucosamine--N-acetylmuramyl-(pentapeptide) pyrophosphoryl-undecaprenol N-acetylglucosamine transferase (370 aa).

Residues 15 to 17 (TGG), Asn129, Arg171, Ser200, Ile256, and Gln301 contribute to the UDP-N-acetyl-alpha-D-glucosamine site.

Belongs to the glycosyltransferase 28 family. MurG subfamily.

The protein resides in the cell membrane. The catalysed reaction is di-trans,octa-cis-undecaprenyl diphospho-N-acetyl-alpha-D-muramoyl-L-alanyl-D-glutamyl-meso-2,6-diaminopimeloyl-D-alanyl-D-alanine + UDP-N-acetyl-alpha-D-glucosamine = di-trans,octa-cis-undecaprenyl diphospho-[N-acetyl-alpha-D-glucosaminyl-(1-&gt;4)]-N-acetyl-alpha-D-muramoyl-L-alanyl-D-glutamyl-meso-2,6-diaminopimeloyl-D-alanyl-D-alanine + UDP + H(+). It functions in the pathway cell wall biogenesis; peptidoglycan biosynthesis. Functionally, cell wall formation. Catalyzes the transfer of a GlcNAc subunit on undecaprenyl-pyrophosphoryl-MurNAc-pentapeptide (lipid intermediate I) to form undecaprenyl-pyrophosphoryl-MurNAc-(pentapeptide)GlcNAc (lipid intermediate II). The chain is UDP-N-acetylglucosamine--N-acetylmuramyl-(pentapeptide) pyrophosphoryl-undecaprenol N-acetylglucosamine transferase from Caldicellulosiruptor saccharolyticus (strain ATCC 43494 / DSM 8903 / Tp8T 6331).